The following is a 361-amino-acid chain: Diacylglycerol O-acyltransferase 2 (361 aa).

The Cytoplasmic segment spans residues 1–42; it reads MKTIIAAYSGVLRGTGSSLLSAVHDLPSIPWLSKSSVVRHLQ. Residues 43-61 traverse the membrane as a helical segment; sequence IISVLQWVLSFLILGVACT. Topologically, residues 62 to 65 are lumenal; that stretch reads AVLV. A helical transmembrane segment spans residues 66 to 85; sequence YIFCTDLWLIAALYFTWMVL. The Cytoplasmic segment spans residues 86-361; the sequence is DWNTPYKGGR…LPDSETLEFI (276 aa).

This sequence belongs to the diacylglycerol acyltransferase family.

The protein localises to the endoplasmic reticulum membrane. The protein resides in the lipid droplet. It localises to the cytoplasm. Its subcellular location is the perinuclear region. The catalysed reaction is an acyl-CoA + a 1,2-diacyl-sn-glycerol = a triacyl-sn-glycerol + CoA. It catalyses the reaction all-trans-retinol + an acyl-CoA = an all-trans-retinyl ester + CoA. It carries out the reaction 2-(9Z-octadecenoyl)-glycerol + (9Z)-octadecenoyl-CoA = 1,2-di-(9Z-octadecenoyl)-sn-glycerol + CoA. The enzyme catalyses 1,2-di-(9Z-octadecenoyl)-sn-glycerol + (9Z)-octadecenoyl-CoA = 1,2,3-tri-(9Z-octadecenoyl)-glycerol + CoA. The catalysed reaction is all-trans-retinol + hexadecanoyl-CoA = all-trans-retinyl hexadecanoate + CoA. It catalyses the reaction 1-O-(9Z-octadecenyl)-glycerol + (9Z)-octadecenoyl-CoA = 1-O-(9Z-octadecyl)-3-(9Z-octadecenoyl)-glycerol + CoA. It carries out the reaction 1-(9Z-octadecenoyl)-glycerol + (9Z)-octadecenoyl-CoA = 1,2-di-(9Z-octadecenoyl)-glycerol + CoA. The enzyme catalyses 1,2-di-(9Z-octadecenoyl)-sn-glycerol + hexadecanoyl-CoA = 1,2-di-(9Z)-octadecenoyl-3-hexadecanoyl-sn-glycerol + CoA. The catalysed reaction is 1,3-di-(9Z-octadecenoyl)-glycerol + (9Z)-octadecenoyl-CoA = 1,2,3-tri-(9Z-octadecenoyl)-glycerol + CoA. It catalyses the reaction 2,3-di-(9Z)-octadecenoyl-sn-glycerol + (9Z)-octadecenoyl-CoA = 1,2,3-tri-(9Z-octadecenoyl)-glycerol + CoA. It carries out the reaction 2-(9Z-octadecenoyl)-glycerol + hexadecanoyl-CoA = 1-hexadecanoyl-2-(9Z-octadecenoyl)-sn-glycerol + CoA. It functions in the pathway glycerolipid metabolism; triacylglycerol biosynthesis. Functionally, essential acyltransferase that catalyzes the terminal and only committed step in triacylglycerol synthesis by using diacylglycerol and fatty acyl CoA as substrates. Required for synthesis and storage of intracellular triglycerides. Probably plays a central role in cytosolic lipid accumulation. The chain is Diacylglycerol O-acyltransferase 2 (dgat2) from Xenopus laevis (African clawed frog).